The following is a 506-amino-acid chain: Probable E3 ubiquitin-protein ligase ARI14 (506 aa).

The segment at 79–308 (PDSSSEISLE…VDSGFCIKTE (230 aa)) is TRIAD supradomain. The RING-type 1 zinc finger occupies 83-140 (SEISLETDVYEFDGDNDLISMPFCSHKFDSKYWREYLEKNFYYVEKIQTTISCPDQDC). Zn(2+) contacts are provided by Cys-106, His-108, Cys-135, Cys-140, Cys-180, Cys-185, Cys-207, Cys-209, Cys-214, Cys-217, His-222, Cys-227, Cys-258, Cys-261, Cys-277, Cys-279, Cys-284, Cys-287, His-294, and Cys-304. An IBR-type zinc finger spans residues 158–227 (EMYERYIWRS…RLESHRPVSC (70 aa)). The segment at 258–287 (CPHCLCSLESDTKMPQFLTCVCRLRFCSRC) adopts an RING-type 2; atypical zinc-finger fold. The RanBP2-type zinc-finger motif lies at 462–492 (GTGPFWYCDRCTYANTWEDNECEMCYDDSAS).

This sequence belongs to the RBR family. Ariadne subfamily. The cofactor is Zn(2+). In terms of tissue distribution, mostly expressed in closed flowers and, to a lower extent, in pollen.

It catalyses the reaction [E2 ubiquitin-conjugating enzyme]-S-ubiquitinyl-L-cysteine + [acceptor protein]-L-lysine = [E2 ubiquitin-conjugating enzyme]-L-cysteine + [acceptor protein]-N(6)-ubiquitinyl-L-lysine.. Its pathway is protein modification; protein ubiquitination. Functionally, might act as an E3 ubiquitin-protein ligase, or as part of E3 complex, which accepts ubiquitin from specific E2 ubiquitin-conjugating enzymes and then transfers it to substrates. Negatively regulates male gametophyte formation and double fertilization. The chain is Probable E3 ubiquitin-protein ligase ARI14 from Arabidopsis thaliana (Mouse-ear cress).